The sequence spans 243 residues: Pyridoxine 5'-phosphate synthase (243 aa).

N9 serves as a coordination point for 3-amino-2-oxopropyl phosphate. 11-12 is a 1-deoxy-D-xylulose 5-phosphate binding site; sequence DH. R20 serves as a coordination point for 3-amino-2-oxopropyl phosphate. The Proton acceptor role is filled by H45. Positions 47 and 52 each coordinate 1-deoxy-D-xylulose 5-phosphate. Catalysis depends on E72, which acts as the Proton acceptor. 1-deoxy-D-xylulose 5-phosphate is bound at residue T102. Residue H193 is the Proton donor of the active site. 3-amino-2-oxopropyl phosphate contacts are provided by residues G194 and 215–216; that span reads GH.

The protein belongs to the PNP synthase family. In terms of assembly, homooctamer; tetramer of dimers.

The protein resides in the cytoplasm. It catalyses the reaction 3-amino-2-oxopropyl phosphate + 1-deoxy-D-xylulose 5-phosphate = pyridoxine 5'-phosphate + phosphate + 2 H2O + H(+). It participates in cofactor biosynthesis; pyridoxine 5'-phosphate biosynthesis; pyridoxine 5'-phosphate from D-erythrose 4-phosphate: step 5/5. Its function is as follows. Catalyzes the complicated ring closure reaction between the two acyclic compounds 1-deoxy-D-xylulose-5-phosphate (DXP) and 3-amino-2-oxopropyl phosphate (1-amino-acetone-3-phosphate or AAP) to form pyridoxine 5'-phosphate (PNP) and inorganic phosphate. The protein is Pyridoxine 5'-phosphate synthase of Escherichia coli O157:H7.